We begin with the raw amino-acid sequence, 403 residues long: Probable eukaryotic initiation factor 4A (403 aa).

The disordered stretch occupies residues 1–29 (MAQNDKIAPQDQDSFLDDQPGVRPIPSFD). The Q motif signature appears at 26–54 (PSFDDMPLHQNLLRGIYSYGFEKPSSIQQ). The Helicase ATP-binding domain occupies 57 to 230 (IAPFTRGGDI…KKFMRDPVRI (174 aa)). 70–77 (AQSGTGKT) contacts ATP. The DEAD box motif lies at 178–181 (DEAD). One can recognise a Helicase C-terminal domain in the interval 241–401 (GIKQFFIAVE…ELPVDFAAYL (161 aa)).

This sequence belongs to the DEAD box helicase family. eIF4A subfamily. EIF4F is a multi-subunit complex, the composition of which varies with external and internal environmental conditions. It is composed of at least EIF4A, EIF4E and EIF4G.

It catalyses the reaction ATP + H2O = ADP + phosphate + H(+). In terms of biological role, ATP-dependent RNA helicase which is a subunit of the eIF4F complex involved in cap recognition and is required for mRNA binding to ribosome. In the current model of translation initiation, eIF4A unwinds RNA secondary structures in the 5'-UTR of mRNAs which is necessary to allow efficient binding of the small ribosomal subunit, and subsequent scanning for the initiator codon. In Leishmania infantum, this protein is Probable eukaryotic initiation factor 4A.